We begin with the raw amino-acid sequence, 78 residues long: Acyl carrier protein (78 aa).

One can recognise a Carrier domain in the interval 2–77 (STIEESVKSI…AAIDFIKESK (76 aa)). Ser37 is subject to O-(pantetheine 4'-phosphoryl)serine.

This sequence belongs to the acyl carrier protein (ACP) family. In terms of processing, 4'-phosphopantetheine is transferred from CoA to a specific serine of apo-ACP by AcpS. This modification is essential for activity because fatty acids are bound in thioester linkage to the sulfhydryl of the prosthetic group.

Its subcellular location is the cytoplasm. It functions in the pathway lipid metabolism; fatty acid biosynthesis. Carrier of the growing fatty acid chain in fatty acid biosynthesis. The polypeptide is Acyl carrier protein (Wigglesworthia glossinidia brevipalpis).